The primary structure comprises 345 residues: D-apiose dehydrogenase (345 aa).

Position 15–16 (15–16 (FF)) interacts with NAD(+). Residues tryptophan 24, lysine 25, valine 27, and alanine 30 each coordinate Mg(2+). Residues aspartate 37, serine 79, 97–98 (QK), asparagine 126, and 165–167 (QPY) each bind NAD(+). Lysine 98 contributes to the substrate binding site. 4 residues coordinate substrate: glutamine 165, aspartate 178, histidine 182, and tyrosine 232.

Belongs to the Gfo/Idh/MocA family.

It catalyses the reaction D-apiofuranose + NAD(+) = D-apionolactone + NADH + H(+). It participates in carbohydrate metabolism. Involved in catabolism of D-apiose. Catalyzes oxidation of D-apiose to D-apionolactone. The protein is D-apiose dehydrogenase of Rhizobium rhizogenes (strain K84 / ATCC BAA-868) (Agrobacterium radiobacter).